The following is a 360-amino-acid chain: D-alanine--D-alanine ligase (360 aa).

The region spanning lysine 146–glutamate 352 is the ATP-grasp domain. ATP is bound at residue glutamate 179–glutamate 234. Mg(2+) contacts are provided by aspartate 305, glutamate 319, and asparagine 321.

It belongs to the D-alanine--D-alanine ligase family. Mg(2+) serves as cofactor. It depends on Mn(2+) as a cofactor.

It localises to the cytoplasm. It catalyses the reaction 2 D-alanine + ATP = D-alanyl-D-alanine + ADP + phosphate + H(+). Its pathway is cell wall biogenesis; peptidoglycan biosynthesis. Cell wall formation. The sequence is that of D-alanine--D-alanine ligase from Chlorobium chlorochromatii (strain CaD3).